The sequence spans 51 residues: MYLTPSEKRINLSKVHPTDKLADQIFAYYKEGERDGKDEIIKNVPLKRIRK.

Belongs to the CYFIP family. In terms of assembly, component of the WAVE1 complex composed of ABI2, CYFIP1 or CYFIP2, BRK1, NCKAP1 and WASF1/WAVE1. Within the complex, a heterodimer containing NCKAP1 and CYFIP1 interacts with a heterotrimer formed by WAVE1, ABI2 and BRK1. Component of the CYFIP1-EIF4E-FMR1 complex which is composed of CYFIP, EIF4E and FMR1. Interacts with FMR1 but does not bind to related proteins FXR1 or FXR2. Interaction with EIF4E stimulates FMR1 binding. Component of the WAVE2 complex composed of ABI1, CYFIP1/SRA1, NCKAP1/NAP1 (NCKAP1l/HEM1 in hematopoietic cells) and WASF2/WAVE2. Interacts with the active GTP-bound form of RAC1. Interacts through its C-terminus with the C-terminus of DPYSL2/CRMP2 which is necessary for DPYSL2-induced axon outgrowth. Interacts with NYAP1, NYAP2 and MYO16. Interacts with TMEM108 (via N-terminus); the interaction associates TMEM108 with the WAVE1 complex.

Its subcellular location is the cytoplasm. It localises to the perinuclear region. It is found in the cell projection. The protein localises to the lamellipodium. The protein resides in the ruffle. Its subcellular location is the synapse. It localises to the synaptosome. Its function is as follows. Component of the CYFIP1-EIF4E-FMR1 complex which binds to the mRNA cap and mediates translational repression. In the CYFIP1-EIF4E-FMR1 complex this subunit is an adapter between EIF4E and FMR1. Promotes the translation repression activity of FMR1 in brain probably by mediating its association with EIF4E and mRNA. Regulates formation of membrane ruffles and lamellipodia. Plays a role in axon outgrowth. Binds to F-actin but not to RNA. Part of the WAVE complex that regulates actin filament reorganization via its interaction with the Arp2/3 complex. Actin remodeling activity is regulated by RAC1. Regulator of epithelial morphogenesis. As component of the WAVE1 complex, required for BDNF-NTRK2 endocytic trafficking and signaling from early endosomes. This Bos taurus (Bovine) protein is Cytoplasmic FMR1-interacting protein 1.